The sequence spans 551 residues: Glucose-6-phosphate isomerase 2 (551 aa).

The active-site Proton donor is glutamate 353. Residues histidine 384 and lysine 512 contribute to the active site.

Belongs to the GPI family.

It is found in the cytoplasm. It catalyses the reaction alpha-D-glucose 6-phosphate = beta-D-fructose 6-phosphate. It functions in the pathway carbohydrate biosynthesis; gluconeogenesis. The protein operates within carbohydrate degradation; glycolysis; D-glyceraldehyde 3-phosphate and glycerone phosphate from D-glucose: step 2/4. In terms of biological role, catalyzes the reversible isomerization of glucose-6-phosphate to fructose-6-phosphate. The polypeptide is Glucose-6-phosphate isomerase 2 (Colwellia psychrerythraea (strain 34H / ATCC BAA-681) (Vibrio psychroerythus)).